The following is a 250-amino-acid chain: Ubiquinone biosynthesis O-methyltransferase (250 aa).

Positions 41, 72, 93, and 136 each coordinate S-adenosyl-L-methionine.

The protein belongs to the methyltransferase superfamily. UbiG/COQ3 family.

The enzyme catalyses a 3-demethylubiquinol + S-adenosyl-L-methionine = a ubiquinol + S-adenosyl-L-homocysteine + H(+). The catalysed reaction is a 3-(all-trans-polyprenyl)benzene-1,2-diol + S-adenosyl-L-methionine = a 2-methoxy-6-(all-trans-polyprenyl)phenol + S-adenosyl-L-homocysteine + H(+). It functions in the pathway cofactor biosynthesis; ubiquinone biosynthesis. Its function is as follows. O-methyltransferase that catalyzes the 2 O-methylation steps in the ubiquinone biosynthetic pathway. The sequence is that of Ubiquinone biosynthesis O-methyltransferase from Agrobacterium fabrum (strain C58 / ATCC 33970) (Agrobacterium tumefaciens (strain C58)).